We begin with the raw amino-acid sequence, 1216 residues long: RAB11-binding protein RELCH (1216 aa).

Disordered stretches follow at residues 1 to 73 and 135 to 177; these read MAAM…GLPG and GNFE…QLNR. At A2 the chain carries N-acetylalanine. A phosphoserine mark is found at S20 and S22. Residues 21–31 are compositionally biased toward acidic residues; the sequence is DSDEDDDEVAA. The residue at position 32 (T32) is a Phosphothreonine. Residues S54 and S56 each carry the phosphoserine modification. Positions 148-163 are enriched in gly residues; that stretch reads GAPGVPGAAGVGGAGG. 2 positions are modified to phosphoserine: S180 and S182. A Phosphothreonine modification is found at T183. Phosphoserine is present on S186. Residues 197–231 adopt a coiled-coil conformation; the sequence is NRETDEKVAVLEFELRKAKETIQALRANLTKAAEH. The LisH domain occupies 255-287; that stretch reads EKRALNFLVNEFLLKNNYKLTSITFSDENDDQD. A coiled-coil region spans residues 359–397; sequence VQKLEDKISLLNSEKWSLMEQIRRLKSEMDFLKNEHFAI. Residue S385 is modified to Phosphoserine. Residues 401–477 form a disordered region; sequence CDSVQPPLDQ…SSLSSKKTVH (77 aa). Residues 411-435 show a composition bias toward basic and acidic residues; that stretch reads LPHKDSEDSGQHPDVNSSDKGKNTD. A Phosphoserine modification is found at S453. The tract at residues 497 to 779 is interaction with RAB11A and RAB11B; that stretch reads CRMSADSRLG…SSKAKLHGEV (283 aa). HEAT repeat units lie at residues 601-639 and 640-679; these read LLPQCWEQINHKYPERRLLVAESCGALAPYLPKEIRSSL and VLSMLQQMLMEDKADLVREAVIKSLGIIMGYIDDPDKYHQ. A Phosphoserine modification is found at S792. An HEAT 3 repeat occupies 1004–1042; it reads VAPALVTLSSDPEFSVRIATIPAFGTIMETVIQRELLER. At S1149 the chain carries Phosphoserine.

Its subcellular location is the recycling endosome. The protein resides in the golgi apparatus. It localises to the trans-Golgi network. In terms of biological role, regulates intracellular cholesterol distribution from recycling endosomes to the trans-Golgi network through interactions with RAB11 and OSBP. Functions in membrane tethering and promotes OSBP-mediated cholesterol transfer between RAB11-bound recycling endosomes and OSBP-bound Golgi-like membranes. The protein is RAB11-binding protein RELCH of Homo sapiens (Human).